The following is a 202-amino-acid chain: 3-isopropylmalate dehydratase small subunit (202 aa).

The protein belongs to the LeuD family. LeuD type 1 subfamily. In terms of assembly, heterodimer of LeuC and LeuD.

The enzyme catalyses (2R,3S)-3-isopropylmalate = (2S)-2-isopropylmalate. It participates in amino-acid biosynthesis; L-leucine biosynthesis; L-leucine from 3-methyl-2-oxobutanoate: step 2/4. Functionally, catalyzes the isomerization between 2-isopropylmalate and 3-isopropylmalate, via the formation of 2-isopropylmaleate. This is 3-isopropylmalate dehydratase small subunit from Caulobacter vibrioides (strain ATCC 19089 / CIP 103742 / CB 15) (Caulobacter crescentus).